The primary structure comprises 189 residues: Accessory gene regulator protein B (189 aa).

5 consecutive transmembrane segments (helical) span residues 50–70 (VSLL…FFFI), 83–103 (LLCY…VGYV), 105–125 (VSSL…SIYA), 143–163 (KIKA…LNEP), and 164–184 (YQQL…PIFF).

This sequence belongs to the AgrB family.

The protein localises to the cell membrane. Its function is as follows. Essential for the production of a quorum sensing system signal molecule, the autoinducing peptide (AIP). This quorum sensing system is responsible for the regulation of the expression of virulence factor genes. Involved in the proteolytic processing of AgrD, the precursor of AIP. The protein is Accessory gene regulator protein B of Staphylococcus saprophyticus subsp. saprophyticus (strain ATCC 15305 / DSM 20229 / NCIMB 8711 / NCTC 7292 / S-41).